Here is a 546-residue protein sequence, read N- to C-terminus: Chaperonin GroEL (546 aa).

ATP contacts are provided by residues 30 to 33 (TLGP), lysine 51, 87 to 91 (DGTTT), glycine 415, and aspartate 496. A disordered region spans residues 526 to 546 (PEDKPAPAMPGGMGGMGGMDF). Residues 536–546 (GGMGGMGGMDF) show a composition bias toward gly residues.

This sequence belongs to the chaperonin (HSP60) family. In terms of assembly, forms a cylinder of 14 subunits composed of two heptameric rings stacked back-to-back. Interacts with the co-chaperonin GroES.

The protein resides in the cytoplasm. It catalyses the reaction ATP + H2O + a folded polypeptide = ADP + phosphate + an unfolded polypeptide.. Functionally, together with its co-chaperonin GroES, plays an essential role in assisting protein folding. The GroEL-GroES system forms a nano-cage that allows encapsulation of the non-native substrate proteins and provides a physical environment optimized to promote and accelerate protein folding. The protein is Chaperonin GroEL of Zymomonas mobilis subsp. mobilis (strain ATCC 31821 / ZM4 / CP4).